The primary structure comprises 170 residues: ATP synthase subunit b (170 aa).

A helical membrane pass occupies residues 22 to 44 (IINLAVVVFGLYKFLPGFLGKIL).

This sequence belongs to the ATPase B chain family. F-type ATPases have 2 components, F(1) - the catalytic core - and F(0) - the membrane proton channel. F(1) has five subunits: alpha(3), beta(3), gamma(1), delta(1), epsilon(1). F(0) has four main subunits: a(1), b(1), b'(1) and c(10-14). The alpha and beta chains form an alternating ring which encloses part of the gamma chain. F(1) is attached to F(0) by a central stalk formed by the gamma and epsilon chains, while a peripheral stalk is formed by the delta, b and b' chains.

It localises to the cellular thylakoid membrane. In terms of biological role, f(1)F(0) ATP synthase produces ATP from ADP in the presence of a proton or sodium gradient. F-type ATPases consist of two structural domains, F(1) containing the extramembraneous catalytic core and F(0) containing the membrane proton channel, linked together by a central stalk and a peripheral stalk. During catalysis, ATP synthesis in the catalytic domain of F(1) is coupled via a rotary mechanism of the central stalk subunits to proton translocation. Its function is as follows. Component of the F(0) channel, it forms part of the peripheral stalk, linking F(1) to F(0). This is ATP synthase subunit b from Prochlorococcus marinus (strain NATL1A).